Consider the following 739-residue polypeptide: Phosphoribosylformylglycinamidine synthase subunit PurL (739 aa).

His-53 is a catalytic residue. The ATP site is built by Tyr-56 and Lys-95. Glu-97 is a binding site for Mg(2+). Substrate-binding positions include 98 to 101 (SHNH) and Arg-120. The active-site Proton acceptor is the His-99. Position 121 (Asp-121) interacts with Mg(2+). Position 244 (Gln-244) interacts with substrate. Asp-274 is a Mg(2+) binding site. Substrate is bound at residue 318-320 (ESQ). ATP is bound by residues Asp-501 and Gly-538. Asn-539 contacts Mg(2+). Residue Ser-541 coordinates substrate.

Belongs to the FGAMS family. In terms of assembly, monomer. Part of the FGAM synthase complex composed of 1 PurL, 1 PurQ and 2 PurS subunits.

The protein resides in the cytoplasm. The catalysed reaction is N(2)-formyl-N(1)-(5-phospho-beta-D-ribosyl)glycinamide + L-glutamine + ATP + H2O = 2-formamido-N(1)-(5-O-phospho-beta-D-ribosyl)acetamidine + L-glutamate + ADP + phosphate + H(+). Its pathway is purine metabolism; IMP biosynthesis via de novo pathway; 5-amino-1-(5-phospho-D-ribosyl)imidazole from N(2)-formyl-N(1)-(5-phospho-D-ribosyl)glycinamide: step 1/2. Part of the phosphoribosylformylglycinamidine synthase complex involved in the purines biosynthetic pathway. Catalyzes the ATP-dependent conversion of formylglycinamide ribonucleotide (FGAR) and glutamine to yield formylglycinamidine ribonucleotide (FGAM) and glutamate. The FGAM synthase complex is composed of three subunits. PurQ produces an ammonia molecule by converting glutamine to glutamate. PurL transfers the ammonia molecule to FGAR to form FGAM in an ATP-dependent manner. PurS interacts with PurQ and PurL and is thought to assist in the transfer of the ammonia molecule from PurQ to PurL. The chain is Phosphoribosylformylglycinamidine synthase subunit PurL from Listeria welshimeri serovar 6b (strain ATCC 35897 / DSM 20650 / CCUG 15529 / CIP 8149 / NCTC 11857 / SLCC 5334 / V8).